The sequence spans 330 residues: Quinone oxidoreductase (330 aa).

The residue at position 2 (Ala2) is an N-acetylalanine. Lys23 bears the N6-acetyllysine mark. NADP(+)-binding positions include Tyr53, 158–161 (SGGV), Gly181, His200, Asn229, 246–249 (VGSK), and 269–271 (VTL). Position 248 is a phosphoserine (Ser248).

This sequence belongs to the zinc-containing alcohol dehydrogenase family. Quinone oxidoreductase subfamily. Homotetramer.

It localises to the cytoplasm. The enzyme catalyses 2 a quinone + NADPH + H(+) = 2 a 1,4-benzosemiquinone + NADP(+). Does not have alcohol dehydrogenase activity. Binds NADP and acts through a one-electron transfer process. Orthoquinones, such as 1,2-naphthoquinone or 9,10-phenanthrenequinone, are the best substrates (in vitro). May act in the detoxification of xenobiotics. Interacts with (AU)-rich elements (ARE) in the 3'-UTR of target mRNA species and enhances their stability. NADPH binding interferes with mRNA binding. The sequence is that of Quinone oxidoreductase (CRYZ) from Lama guanicoe (Guanaco).